The following is a 304-amino-acid chain: uncharacterized protein (304 aa).

The protein belongs to the histone deacetylase family.

Its function is as follows. Putative deacetylase. This is an uncharacterized protein from Synechocystis sp. (strain ATCC 27184 / PCC 6803 / Kazusa).